A 100-amino-acid polypeptide reads, in one-letter code: Large ribosomal subunit protein uL23 (100 aa).

This sequence belongs to the universal ribosomal protein uL23 family. Part of the 50S ribosomal subunit. Contacts protein L29, and trigger factor when it is bound to the ribosome.

One of the early assembly proteins it binds 23S rRNA. One of the proteins that surrounds the polypeptide exit tunnel on the outside of the ribosome. Forms the main docking site for trigger factor binding to the ribosome. In Aggregatibacter actinomycetemcomitans (Actinobacillus actinomycetemcomitans), this protein is Large ribosomal subunit protein uL23.